The following is a 479-amino-acid chain: MSDVIIVGAGPTGLMLAGELRLQGVDVVVVDKDEEPTQFVRALGIHVRSIEIMEQRGLLDKFLAHGRKYPLGGFFAGISKPAPAHLDTAHGYVLGIPQPEIDRILAEHATEVGADIQRGKRVVAIRQDTDNVAAELSDGTTLHARYLVGCDGGRSTVRKLRSTSVFPASRTSADTLIGEMDVTMPADELAAVVAEIRETHKRFGVGPAGNGAFRVVVPAAEVADGRATPTTLDDIKQQLLAIAGTDFGVHSPRWLSRFGDATRLADDYRRDRVFLAGDAAHIHPPMGGQGLNLGVQDAFNLGWKLAAEINGWAPVGLLDTYESERRPVAADVLDNTRAQAELISTAAGPQAVRRLISELMEFEDVKRYLTEKITAISIRYDFGEGDDLLGRRLRNIALTRGNLYDLMRSGRGLLLDQGGQLSVDGWSDRADHIVDTSTELEAPAVLLRPDGHVAWIGDAQAELDTQLSTWFGRSARDRA.

10 residues coordinate FAD: Thr12, Asp31, Lys32, Arg41, Gln98, Val122, Thr156, Asp278, Leu291, and Asn292.

The protein belongs to the rifampicin monooxygenase family. Requires FAD as cofactor.

The enzyme catalyses rifampicin + NADPH + O2 = rifampicin para-naphthoquinone carboxamide + NADP(+) + H2O + H(+). It carries out the reaction rifampicin + NADH + O2 = rifampicin para-naphthoquinone carboxamide + NAD(+) + H2O + H(+). Monooxygenase that can modify rifampicin, thereby inactivating its antibiotic activity. This is Rifampicin monooxygenase from Rhodococcus hoagii (Corynebacterium equii).